Reading from the N-terminus, the 230-residue chain is Thioredoxin domain-containing protein PLP3A (230 aa).

A Thioredoxin domain is found at 89 to 173 (VSEGDFLGEV…GVAMDRLVGF (85 aa)). Positions 197 to 230 (LSKKKKEEDDEDAEYQESIRRSVRSSENLDSDSD) are disordered.

The protein belongs to the phosducin family. In terms of assembly, interacts with TUBB2, TUBB3, TUBB4 and TUBB5. Expressed in embryos, shoot meristems, leaf primordia, root meristems, floral meristems and young floral buds.

Its subcellular location is the cytoplasm. It is found in the nucleus. Its function is as follows. Tubulin-binding protein involved in microtubule formation. The sequence is that of Thioredoxin domain-containing protein PLP3A (PLP3A) from Arabidopsis thaliana (Mouse-ear cress).